The following is a 279-amino-acid chain: Release factor glutamine methyltransferase (279 aa).

Residues 118–122, aspartate 141, and asparagine 182 each bind S-adenosyl-L-methionine; that span reads GTGSG. 182–185 is a binding site for substrate; the sequence is NPPY.

It belongs to the protein N5-glutamine methyltransferase family. PrmC subfamily.

The catalysed reaction is L-glutaminyl-[peptide chain release factor] + S-adenosyl-L-methionine = N(5)-methyl-L-glutaminyl-[peptide chain release factor] + S-adenosyl-L-homocysteine + H(+). In terms of biological role, methylates the class 1 translation termination release factors RF1/PrfA and RF2/PrfB on the glutamine residue of the universally conserved GGQ motif. The protein is Release factor glutamine methyltransferase of Streptococcus pneumoniae (strain ATCC BAA-255 / R6).